The chain runs to 200 residues: Phosphatidylethanolamine N-methyltransferase B (200 aa).

The Lumenal segment spans residues 1–8 (MEKGLSSD). An intramembrane region (helical) is located at residues 9–29 (LIIAFVAIVLHVVNYNVTAQF). The Lumenal segment spans residues 30–39 (EYKTRYFTKL). A helical membrane pass occupies residues 40-58 (IGRNAIYYYAVFLIISALI). Residues 59–86 (RDHFINVAVLSDKDSIILFPTEIANMIG) lie on the Cytoplasmic side of the membrane. A helical transmembrane segment spans residues 87–107 (DSCFIFGILLNIWTLKALGIK). 91 to 93 (IFG) provides a ligand contact to S-adenosyl-L-methionine. Residues 108–150 (GMYNGDSFGHIMDSPVTGGPYQFFSDPQYVGTTIAALGVAIRN) are Lumenal-facing. A helical membrane pass occupies residues 151–171 (QSIYGFLCTILVGVVFYISAT). Topologically, residues 172–200 (FVETPHLKNIYSNRSYSKINFKNLKSLKN) are cytoplasmic. Residue 174–175 (ET) participates in S-adenosyl-L-methionine binding.

The protein belongs to the class VI-like SAM-binding methyltransferase superfamily. PEMT/PEM2 methyltransferase family.

It is found in the endoplasmic reticulum membrane. It localises to the mitochondrion membrane. It catalyses the reaction a 1,2-diacyl-sn-glycero-3-phospho-N-methylethanolamine + S-adenosyl-L-methionine = a 1,2-diacyl-sn-glycero-3-phospho-N,N-dimethylethanolamine + S-adenosyl-L-homocysteine + H(+). It carries out the reaction a 1,2-diacyl-sn-glycero-3-phospho-N,N-dimethylethanolamine + S-adenosyl-L-methionine = a 1,2-diacyl-sn-glycero-3-phosphocholine + S-adenosyl-L-homocysteine + H(+). The enzyme catalyses a 1,2-diacyl-sn-glycero-3-phosphoethanolamine + S-adenosyl-L-methionine = a 1,2-diacyl-sn-glycero-3-phospho-N-methylethanolamine + S-adenosyl-L-homocysteine + H(+). The protein operates within phospholipid metabolism; phosphatidylcholine biosynthesis. Its function is as follows. Catalyzes the three sequential steps of the methylation pathway of phosphatidylcholine biosynthesis, the SAM-dependent methylation of phosphatidylethanolamine (PE) to phosphatidylmonomethylethanolamine (PMME), PMME to phosphatidyldimethylethanolamine (PDME), and PDME to phosphatidylcholine (PC). The chain is Phosphatidylethanolamine N-methyltransferase B (pemtB) from Dictyostelium discoideum (Social amoeba).